A 156-amino-acid chain; its full sequence is Type IV major fimbrial protein FimA (156 aa).

Residues Met1–Gly7 constitute a propeptide, leader sequence. Phe8 carries the post-translational modification N-methylphenylalanine. A helical transmembrane segment spans residues Phe8–Ile28. Intrachain disulfides connect Cys57/Cys67 and Cys141/Cys154.

This sequence belongs to the N-Me-Phe pilin family. As to quaternary structure, the pili are polar flexible filaments of about 5.4 nanometers diameter and 2.5 micrometers average length; they consist of only a single polypeptide chain arranged in a helical configuration of five subunits per turn in the assembled pilus.

The protein resides in the fimbrium. The protein localises to the membrane. Functionally, major component of the type IV fimbriae that plays an essential role in twitching motility, natural transformation, and protease secretion. This chain is Type IV major fimbrial protein FimA (fimA), found in Dichelobacter nodosus (Bacteroides nodosus).